The sequence spans 574 residues: Uric acid-xanthine permease (574 aa).

The segment at 1-20 (MDNSIHSTDGPDSVIPNSNP) is disordered. 12 consecutive transmembrane segments (helical) span residues 77 to 97 (LLAF…VVTP), 111 to 131 (LQQY…MVQI), 141 to 161 (YYIG…ISVA), 188 to 209 (AYGA…LAFV), 217 to 237 (IFPP…LIGT), 264 to 284 (LPWG…SIIL), 296 to 315 (CSVV…CGYF), 338 to 361 (VYGP…IGDV), 427 to 447 (CCLI…IVAI), 451 to 471 (VMGG…QAIV), 482 to 502 (FILT…TWFG), and 522 to 542 (LVLE…NAIM). Residues 555–574 (MPVSAHDNRDGEAEYQSKQA) are disordered. K572 participates in a covalent cross-link: Glycyl lysine isopeptide (Lys-Gly) (interchain with G-Cter in ubiquitin).

It belongs to the nucleobase:cation symporter-2 (NCS2) (TC 2.A.40) family. In terms of processing, ubiquitinated by hulA. Ubiquitination leads to internalization, sorting into the endosomal pathway to the vacuolar lumen where uapA is eventually degraded.

It localises to the cell membrane. In terms of biological role, uric acid-xanthine transporter. The sequence is that of Uric acid-xanthine permease (uapA) from Emericella nidulans (strain FGSC A4 / ATCC 38163 / CBS 112.46 / NRRL 194 / M139) (Aspergillus nidulans).